The following is a 778-amino-acid chain: MEKFGMNFGGGPSKKDLLETIETQKKQLLQYQARLKDVVRAYKSLLKEKEALEASIKVLSVSHEADVGLSGVQPPGLTFPDSVDDRCSTHSEDSTGTATSLDTAASLTSVKGEFGVEDDRAARGPLPPKSEEASGSESGVSSSSGDGPSAGSEMDKRVHQLKTQLATLTSSLATVTQEKSRMEASYLADKKKMKQDLEDANKKAEEERGRLEGDLKVLQEQIAETKARLITQQHDRAQEQSDHALMLRELQKLLQEERTQRQDLELRLEETREALAGRAYAADQVEGFELQTKQLTREVEELKGELQTIRDEKNRPDPRLQELQQEAARLKSHFQAQLQQEMRKTALAEDQLRQQSQVEEQRVAALESQISEVSELLGTYEKAKQKDQLAIQKLKERLLQLDLENKTLALAASSRSSLDIHGDESSLDINVLKDKMEKLKKLLQVAARKSQVTLDVEKLCDPEIMANSEAADGEKATALYYQQELKQLKEEFERYKMRAQVVLKSKNTKDGSLGKELEAAQEQLAELKDKYISLRLSCEELESQHQQEAEDWKQELARLQQLHRQELERSQLDFRDRTLKLEEELHKQRDRALAVLAEKDLELEQLRSVALSSGLPGRRSPVGGVGGGGLGDPADTASSDSLTQALQLAAANEPTFFLYAEQLARKEVEITSLRKQKHRLEVEAHQLQERLLEEGERHREEVGALQSHIEKNMRDQSREGANLEYLKNIIYRFLTLPDSLGRQQTLTAILTILHFSPEEKQVLMRLPSGGSWWPSGKR.

Residues 13–61 (SKKDLLETIETQKKQLLQYQARLKDVVRAYKSLLKEKEALEASIKVLSV) are a coiled coil. Disordered regions lie at residues 70-157 (SGVQ…MDKR), 186-208 (YLAD…EEER), and 617-638 (GRRS…DTAS). Residues 83 to 93 (VDDRCSTHSED) show a composition bias toward basic and acidic residues. 2 stretches are compositionally biased toward low complexity: residues 94 to 109 (STGT…SLTS) and 133 to 152 (ASGS…SAGS). Residues 152–702 (SEMDKRVHQL…EEGERHREEV (551 aa)) adopt a coiled-coil conformation. One can recognise a GRIP domain in the interval 716 to 766 (QSREGANLEYLKNIIYRFLTLPDSLGRQQTLTAILTILHFSPEEKQVLMRL).

It is found in the cytoplasm. Its subcellular location is the golgi apparatus membrane. Probably involved in maintaining Golgi structure. The protein is GRIP and coiled-coil domain-containing protein 1 (Gcc1) of Mus musculus (Mouse).